The chain runs to 420 residues: Probable glycosyltransferase YdaM (420 aa).

The next 4 membrane-spanning stretches (helical) occupy residues 4 to 24 (TLFFISLSLIWVMLLYHMFLM), 299 to 319 (IIFDLFYFFFTYFLFFFGVIM), 332 to 352 (LHLSVGFLAMILWILAFFLFM), and 371 to 391 (FFIVFLMYFTYSQAWIVLVIY).

This sequence belongs to the glycosyltransferase 2 family.

The protein resides in the cell membrane. The polypeptide is Probable glycosyltransferase YdaM (ydaM) (Bacillus subtilis (strain 168)).